A 366-amino-acid polypeptide reads, in one-letter code: Ferredoxin--NADP reductase (366 aa).

Positions 51, 59, 64, 104, 139, 308, and 349 each coordinate FAD.

It belongs to the ferredoxin--NADP reductase type 2 family. Homodimer. FAD serves as cofactor.

It catalyses the reaction 2 reduced [2Fe-2S]-[ferredoxin] + NADP(+) + H(+) = 2 oxidized [2Fe-2S]-[ferredoxin] + NADPH. In Polaromonas sp. (strain JS666 / ATCC BAA-500), this protein is Ferredoxin--NADP reductase.